The chain runs to 109 residues: Cell division protein ZapA (109 aa).

The stretch at 22-99 (EQQDALNLAA…IEQALLEQGR (78 aa)) forms a coiled coil.

This sequence belongs to the ZapA family. Type 1 subfamily. Homodimer. Interacts with FtsZ.

Its subcellular location is the cytoplasm. Activator of cell division through the inhibition of FtsZ GTPase activity, therefore promoting FtsZ assembly into bundles of protofilaments necessary for the formation of the division Z ring. It is recruited early at mid-cell but it is not essential for cell division. The protein is Cell division protein ZapA of Erwinia tasmaniensis (strain DSM 17950 / CFBP 7177 / CIP 109463 / NCPPB 4357 / Et1/99).